The chain runs to 871 residues: DNA mismatch repair protein MutS (871 aa).

616–623 (GPNMAGKS) lines the ATP pocket. The interval 801–825 (ETEKTEESMEGTNLPKKKKEEKTSS) is disordered.

The protein belongs to the DNA mismatch repair MutS family.

In terms of biological role, this protein is involved in the repair of mismatches in DNA. It is possible that it carries out the mismatch recognition step. This protein has a weak ATPase activity. In Clostridium kluyveri (strain NBRC 12016), this protein is DNA mismatch repair protein MutS.